We begin with the raw amino-acid sequence, 242 residues long: Venom nerve growth factor 3 (242 aa).

Positions 1–18 are cleaved as a signal peptide; it reads MSMLCYTLIIAFLIGIWA. The propeptide occupies 19–125; sequence APQSEDNVPL…ALNRNIQAKR (107 aa). A disordered region spans residues 45–69; it reads HEGLKTSRNTDQRHPAPKKVDDQEP. Basic and acidic residues predominate over residues 46 to 66; sequence EGLKTSRNTDQRHPAPKKVDD. Intrachain disulfides connect Cys139–Cys203, Cys181–Cys231, and Cys191–Cys233.

It belongs to the NGF-beta family. In terms of assembly, homodimer; non-covalently linked. As to expression, expressed by the venom gland.

It is found in the secreted. Functionally, nerve growth factor is important for the development and maintenance of the sympathetic and sensory nervous systems. It stimulates division and differentiation of sympathetic and embryonic sensory neurons as well as basal forebrain cholinergic neurons in the brain. Its relevance in the snake venom is not clear. However, it has been shown to inhibit metalloproteinase-dependent proteolysis of platelet glycoprotein Ib alpha, suggesting a metalloproteinase inhibition to prevent metalloprotease autodigestion and/or protection against prey proteases. Binds a lipid between the two protein chains in the homodimer. The lipid-bound form promotes histamine relase from mouse mast cells, contrary to the lipid-free form. This chain is Venom nerve growth factor 3, found in Pseudechis australis (Mulga snake).